A 188-amino-acid polypeptide reads, in one-letter code: uncharacterized protein (188 aa).

This is an uncharacterized protein from Saccharomyces cerevisiae (strain ATCC 204508 / S288c) (Baker's yeast).